The primary structure comprises 273 residues: Anthocyanin regulatory C1 protein (273 aa).

HTH myb-type domains lie at 9–65 (KEGV…RPNI) and 66–116 (RRGN…GRRA). DNA-binding regions (H-T-H motif) lie at residues 37–61 (WREV…LNYL) and 89–112 (WSLI…NSTL). Disordered regions lie at residues 137–164 (ATPA…SAGT) and 196–220 (AGET…SDDC). Positions 204 to 214 (AGGGGGGGGEA) are enriched in gly residues.

The protein resides in the nucleus. Its function is as follows. Controls the expression of genes involved in anthocyanin biosynthesis. Regulates the expression of at least 3 structural genes: chalcone synthase, dihydroflavonol reductase and flavonol O(3) glucosyltransferase. C1 acts as a trans-acting factor. The protein is Anthocyanin regulatory C1 protein (C1) of Zea mays (Maize).